The chain runs to 2201 residues: RNA-directed RNA polymerase L (2201 aa).

An endonuclease region spans residues Lys26–Phe285. Mn(2+)-binding residues include Glu51, Asp88, and Glu101. Lys114 is a catalytic residue. Residues Leu1156 to Val1352 form the RdRp catalytic domain. Asp1312 contacts Mg(2+).

The protein belongs to the Bunyavirales RNA polymerase family. Homomultimer; the oligomeric structure is essential for the polymerase activity. Interacts with nucleoprotein N. Interacts with protein Z; this interaction inhibits viral transcription and replication, Z partially blocks the product exit tunnel for the releasing nascent RNA product. Requires Mn(2+) as cofactor. Mg(2+) is required as a cofactor.

It is found in the virion. The protein resides in the host cytoplasm. It catalyses the reaction RNA(n) + a ribonucleoside 5'-triphosphate = RNA(n+1) + diphosphate. Its function is as follows. RNA-dependent RNA polymerase, which is responsible for the replication and transcription of the viral RNA genome using antigenomic RNA as an intermediate. During transcription, synthesizes subgenomic RNAs and assures their capping by a cap-snatching mechanism, which involves the endonuclease activity cleaving the host capped pre-mRNAs. These short capped RNAs are then used as primers for viral transcription. The 3'-end of subgenomic mRNAs molecules are heterogeneous and not polyadenylated. The replicase function is to direct synthesis of antigenomic and genomic RNA which are encapsidated and non capped. As a consequence of the use of the same enzyme for both transcription and replication, these mechanisms need to be well coordinated. These processes may be regulated by proteins N and Z in a dose-dependent manner. Z protein inhibits the viral polymerase L und thus the viral transcription and RNA synthesis. The sequence is that of RNA-directed RNA polymerase L from Oecomys bicolor (Bicolored arboreal rice rat).